A 360-amino-acid chain; its full sequence is Peptide chain release factor 1 (360 aa).

Q237 is subject to N5-methylglutamine.

This sequence belongs to the prokaryotic/mitochondrial release factor family. Methylated by PrmC. Methylation increases the termination efficiency of RF1.

The protein localises to the cytoplasm. Peptide chain release factor 1 directs the termination of translation in response to the peptide chain termination codons UAG and UAA. This chain is Peptide chain release factor 1, found in Pseudomonas aeruginosa (strain LESB58).